The chain runs to 366 residues: Alanine racemase (366 aa).

Residue Lys40 is the Proton acceptor; specific for D-alanine of the active site. Lys40 carries the N6-(pyridoxal phosphate)lysine modification. Arg136 serves as a coordination point for substrate. The active-site Proton acceptor; specific for L-alanine is Tyr263. Met310 is a substrate binding site.

Belongs to the alanine racemase family. Pyridoxal 5'-phosphate is required as a cofactor.

The enzyme catalyses L-alanine = D-alanine. The protein operates within amino-acid biosynthesis; D-alanine biosynthesis; D-alanine from L-alanine: step 1/1. Its function is as follows. Catalyzes the interconversion of L-alanine and D-alanine. May also act on other amino acids. The sequence is that of Alanine racemase (alr) from Streptococcus equi subsp. equi (strain 4047).